An 89-amino-acid polypeptide reads, in one-letter code: Small ribosomal subunit protein uS15 (89 aa).

Belongs to the universal ribosomal protein uS15 family. As to quaternary structure, part of the 30S ribosomal subunit. Forms a bridge to the 50S subunit in the 70S ribosome, contacting the 23S rRNA.

Its function is as follows. One of the primary rRNA binding proteins, it binds directly to 16S rRNA where it helps nucleate assembly of the platform of the 30S subunit by binding and bridging several RNA helices of the 16S rRNA. Functionally, forms an intersubunit bridge (bridge B4) with the 23S rRNA of the 50S subunit in the ribosome. The sequence is that of Small ribosomal subunit protein uS15 from Oleidesulfovibrio alaskensis (strain ATCC BAA-1058 / DSM 17464 / G20) (Desulfovibrio alaskensis).